Reading from the N-terminus, the 244-residue chain is Protein crossbronx (244 aa).

Positions 20–176 (QQEYKILAEY…VQENIKESKE (157 aa)) constitute a UBC core domain. Residues 209 to 244 (AGRSKQTEPSAQQGNGGHATGLSWVKEGEFKPLSIE) are disordered.

This sequence belongs to the ubiquitin-conjugating enzyme family. FTS subfamily.

The protein is Protein crossbronx (cbx) of Drosophila sechellia (Fruit fly).